Consider the following 498-residue polypeptide: Bifunctional protein GlmU (498 aa).

Positions 1–238 are pyrophosphorylase; the sequence is MSDAAVVILA…PALVAGVNDR (238 aa). Residues 9–12, Lys23, Gln80, and 85–86 contribute to the UDP-N-acetyl-alpha-D-glucosamine site; these read LAAG and GT. Asp111 contributes to the Mg(2+) binding site. UDP-N-acetyl-alpha-D-glucosamine contacts are provided by Gly148, Glu163, Asn178, and Asn236. Asn236 lines the Mg(2+) pocket. Positions 239–259 are linker; it reads VQLADLGAELNRRVVAAHQRA. The segment at 260-498 is N-acetyltransferase; sequence GVTIVDPATT…TAKPAPATGE (239 aa). 2 residues coordinate UDP-N-acetyl-alpha-D-glucosamine: Arg341 and Lys359. His371 acts as the Proton acceptor in catalysis. UDP-N-acetyl-alpha-D-glucosamine is bound by residues Tyr374 and Asn385. Residues Ala388, 394–395, Ser413, and Ala431 each bind acetyl-CoA; that span reads NY. A disordered region spans residues 470–498; sequence AAEAAAADGDTAAADRAAATAKPAPATGE.

This sequence in the N-terminal section; belongs to the N-acetylglucosamine-1-phosphate uridyltransferase family. It in the C-terminal section; belongs to the transferase hexapeptide repeat family. Homotrimer. Mg(2+) is required as a cofactor.

It localises to the cytoplasm. The enzyme catalyses alpha-D-glucosamine 1-phosphate + acetyl-CoA = N-acetyl-alpha-D-glucosamine 1-phosphate + CoA + H(+). The catalysed reaction is N-acetyl-alpha-D-glucosamine 1-phosphate + UTP + H(+) = UDP-N-acetyl-alpha-D-glucosamine + diphosphate. It functions in the pathway nucleotide-sugar biosynthesis; UDP-N-acetyl-alpha-D-glucosamine biosynthesis; N-acetyl-alpha-D-glucosamine 1-phosphate from alpha-D-glucosamine 6-phosphate (route II): step 2/2. It participates in nucleotide-sugar biosynthesis; UDP-N-acetyl-alpha-D-glucosamine biosynthesis; UDP-N-acetyl-alpha-D-glucosamine from N-acetyl-alpha-D-glucosamine 1-phosphate: step 1/1. Its pathway is bacterial outer membrane biogenesis; LPS lipid A biosynthesis. In terms of biological role, catalyzes the last two sequential reactions in the de novo biosynthetic pathway for UDP-N-acetylglucosamine (UDP-GlcNAc). The C-terminal domain catalyzes the transfer of acetyl group from acetyl coenzyme A to glucosamine-1-phosphate (GlcN-1-P) to produce N-acetylglucosamine-1-phosphate (GlcNAc-1-P), which is converted into UDP-GlcNAc by the transfer of uridine 5-monophosphate (from uridine 5-triphosphate), a reaction catalyzed by the N-terminal domain. The polypeptide is Bifunctional protein GlmU (Mycolicibacterium gilvum (strain PYR-GCK) (Mycobacterium gilvum (strain PYR-GCK))).